Consider the following 196-residue polypeptide: FMN-dependent NADH:quinone oxidoreductase (196 aa).

FMN is bound by residues Ser10, 16–18 (SQS), 93–96 (MYNF), and 137–140 (TRGG).

This sequence belongs to the azoreductase type 1 family. In terms of assembly, homodimer. The cofactor is FMN.

It catalyses the reaction 2 a quinone + NADH + H(+) = 2 a 1,4-benzosemiquinone + NAD(+). The catalysed reaction is N,N-dimethyl-1,4-phenylenediamine + anthranilate + 2 NAD(+) = 2-(4-dimethylaminophenyl)diazenylbenzoate + 2 NADH + 2 H(+). Quinone reductase that provides resistance to thiol-specific stress caused by electrophilic quinones. Its function is as follows. Also exhibits azoreductase activity. Catalyzes the reductive cleavage of the azo bond in aromatic azo compounds to the corresponding amines. This chain is FMN-dependent NADH:quinone oxidoreductase, found in Shewanella amazonensis (strain ATCC BAA-1098 / SB2B).